A 512-amino-acid polypeptide reads, in one-letter code: MFLVIGAILAGALFVGLLLYQLKFKRLIDLISYMPGPPVLPLVGHGHHFIGKPPHEMVKKIFEFMETYSKDQVLKVWLGPELNVLMGNPKDVEVVLGTLRFNDKAGEYKALEPWLKEGLLVSRGRKWHKRRKIITPAFHFKILDQFVDVFEKGSRDLLRNMEQDRLKHGDSGFSLYDWINLCTMDTICETAMGVSINAQSNADSEYVQAVKTISMVLHKRMFNILYRFDLTYMLTPLARAEKKALNVLHQFTEKIIVQRREELIREGSSQESSKDDADVGAKRKMAFLDILLQSTVDERPLSNLDIREEVDTFMFEGHDTTSSALMFFFYNIATHPEAQKKCFEEIRSVVGNDKSTPVSYELLNQLHYVDLCVKETLRMYPSVPLLGRKVLEDCEINGKLIPAGTNIGISPLYLGRREELFSEPNSFKPERFDVVTTAEKLNPYAYIPFSAGPRNCIGQKFAMLEIKAIVANVLRHYEVDFVGDSSEPPVLIAELILRTKDPLMFKVRERVY.

Glu-316 and Cys-456 together coordinate heme.

This sequence belongs to the cytochrome P450 family. Heme serves as cofactor.

It is found in the endoplasmic reticulum membrane. The protein resides in the microsome membrane. Involved in the metabolism of insect hormones and in the breakdown of synthetic insecticides. The sequence is that of Cytochrome P450 4d1 (Cyp4d1) from Drosophila simulans (Fruit fly).